A 67-amino-acid polypeptide reads, in one-letter code: Major cold shock protein (67 aa).

The CSD domain occupies 4–64 (GTVKWFNAEK…GPKGLQAANV (61 aa)).

The protein localises to the cytoplasm. This is Major cold shock protein (cspA) from Micrococcus luteus (strain ATCC 4698 / DSM 20030 / JCM 1464 / CCM 169 / CCUG 5858 / IAM 1056 / NBRC 3333 / NCIMB 9278 / NCTC 2665 / VKM Ac-2230) (Micrococcus lysodeikticus).